The chain runs to 305 residues: RNA-binding protein rnp-1 (305 aa).

One can recognise an RRM domain in the interval 3-72 (SKLFVGNLPD…KVVNIKKSTS (70 aa)). The CCHC-type zinc-finger motif lies at 84 to 97 (CFRCQSDEHRTPQC). The interval 284 to 305 (QQIQHQQATGSPAPVPAPPRLY) is disordered. Residues 296 to 305 (APVPAPPRLY) are compositionally biased toward pro residues.

Expressed throughout the germline.

Its function is as follows. RNA-binding protein that is required for the germ line to transition from spermatogenesis to oogenesis and allow for normal oocyte development. This Caenorhabditis elegans protein is RNA-binding protein rnp-1.